The following is a 300-amino-acid chain: Telomere repeat-binding factor 1 (300 aa).

Positions 1–58 constitute an HTH myb-type domain; sequence MGAPKQKWTQEEESALKSGVIKHGPGKWRTILKDPEFSGVLYLRSNVDLKDKWRNMSV. Positions 28-57 form a DNA-binding region, H-T-H motif; sequence WRTILKDPEFSGVLYLRSNVDLKDKWRNMS. Disordered stretches follow at residues 93-119 and 185-213; these read LQSDEENVDATSGLQVSSNPPPRRPNV and NSTPLSSHRRKGLGVFGGKQRTSSLPSPK. The H15 domain maps to 117-185; sequence PNVRLDSLIM…KVKRKYRIPN (69 aa). Residues 241 to 290 are a coiled coil; that stretch reads EAAAVAAQAVAEAEAAMAEAEEAAKEAEAAEAEAEAAQAFAEEASKTLKG.

Belongs to the histone H1/H5 family. SMH subfamily. As to quaternary structure, forms a homodimer and heterodimers with TRB2 or TRB3. Interacts with POT1b, TRB2 and TRB3 through its H15 domain.

The protein resides in the nucleus. Its subcellular location is the nucleolus. It localises to the chromosome. Its function is as follows. Binds preferentially double-stranded telomeric repeats. In Arabidopsis thaliana (Mouse-ear cress), this protein is Telomere repeat-binding factor 1 (TRB1).